The primary structure comprises 87 residues: Large ribosomal subunit protein bL28 (87 aa).

This sequence belongs to the bacterial ribosomal protein bL28 family.

In Akkermansia muciniphila (strain ATCC BAA-835 / DSM 22959 / JCM 33894 / BCRC 81048 / CCUG 64013 / CIP 107961 / Muc), this protein is Large ribosomal subunit protein bL28.